The chain runs to 452 residues: Probable 1,4-beta-D-glucan cellobiohydrolase A (452 aa).

The N-terminal stretch at 1 to 17 (MHQRALLFSALAVAANA) is a signal peptide. N-linked (GlcNAc...) asparagine glycosylation is present at Asn-81. Residue Glu-226 is the Nucleophile of the active site. Glu-231 serves as the catalytic Proton donor. N-linked (GlcNAc...) asparagine glycosylation is present at Asn-284. Positions 405-431 (ADPSKPGVARGTCEHGAGDPENVESQH) are disordered.

The protein belongs to the glycosyl hydrolase 7 (cellulase C) family.

It localises to the secreted. The enzyme catalyses Hydrolysis of (1-&gt;4)-beta-D-glucosidic linkages in cellulose and cellotetraose, releasing cellobiose from the non-reducing ends of the chains.. The biological conversion of cellulose to glucose generally requires three types of hydrolytic enzymes: (1) Endoglucanases which cut internal beta-1,4-glucosidic bonds; (2) Exocellobiohydrolases that cut the disaccharide cellobiose from the non-reducing end of the cellulose polymer chain; (3) Beta-1,4-glucosidases which hydrolyze the cellobiose and other short cello-oligosaccharides to glucose. This is Probable 1,4-beta-D-glucan cellobiohydrolase A (cbhA) from Aspergillus fumigatus (strain CBS 144.89 / FGSC A1163 / CEA10) (Neosartorya fumigata).